Here is an 84-residue protein sequence, read N- to C-terminus: uncharacterized protein (84 aa).

Transmembrane regions (helical) follow at residues 4–20, 27–49, and 59–81; these read AYVL…IKYG, VWKA…WIAF, and IGLA…VYVL.

The protein localises to the cell membrane. This is an uncharacterized protein from Archaeoglobus fulgidus (strain ATCC 49558 / DSM 4304 / JCM 9628 / NBRC 100126 / VC-16).